The primary structure comprises 192 residues: Peptide deformylase (192 aa).

Fe cation-binding residues include C108 and H150. Residue E151 is part of the active site. H154 contacts Fe cation.

It belongs to the polypeptide deformylase family. The cofactor is Fe(2+).

It carries out the reaction N-terminal N-formyl-L-methionyl-[peptide] + H2O = N-terminal L-methionyl-[peptide] + formate. In terms of biological role, removes the formyl group from the N-terminal Met of newly synthesized proteins. Requires at least a dipeptide for an efficient rate of reaction. N-terminal L-methionine is a prerequisite for activity but the enzyme has broad specificity at other positions. This chain is Peptide deformylase, found in Opitutus terrae (strain DSM 11246 / JCM 15787 / PB90-1).